The following is a 1276-amino-acid chain: Receptor-type guanylate cyclase gcy-28 (1276 aa).

An N-terminal signal peptide occupies residues 1-18; that stretch reads MLRWLTLLSCILLTALHG. Residues 19-515 lie on the Extracellular side of the membrane; it reads NIVEDVGAAQ…KSKCPGYPLH (497 aa). N-linked (GlcNAc...) asparagine glycans are attached at residues asparagine 87, asparagine 196, asparagine 338, asparagine 384, asparagine 387, asparagine 414, asparagine 428, and asparagine 444. The chain crosses the membrane as a helical span at residues 516 to 536; sequence VYLLMGSFLLILVLVGLFIFF. The Cytoplasmic segment spans residues 537–1276; sequence WRRYKLEQEL…EIPDFGEEFA (740 aa). Disordered stretches follow at residues 562-601 and 635-709; these read ESQK…NSDK and IFTR…KKSL. Basic residues predominate over residues 567-577; sequence NEKKKAKKRKN. Composition is skewed to polar residues over residues 590–599 and 642–660; these read RSTSRSSVNS and TPPS…SLQK. Residues 717–1013 enclose the Protein kinase domain; that stretch reads SFGMVSFKSG…SSVRKAVRSL (297 aa). Residues 723–731 and lysine 756 contribute to the ATP site; that span reads FKSGSGGSV. A coiled-coil region spans residues 1017–1063; the sequence is NETSNLVDNLLKRMEQYANNLEGLVEERTQEYLAEKKKVEELLHQLL. Residues 1086–1215 form the Guanylate cyclase domain; that stretch reads TIYFSDIVGF…DTVNTSSRME (130 aa). Aspartate 1091, isoleucine 1092, and aspartate 1135 together coordinate Mg(2+).

Belongs to the adenylyl cyclase class-4/guanylyl cyclase family. Expressed in head neurons, ventral cord and tail neurons, body wall muscle, hypodermis, somatic gonad and intestine. Isoform d is expressed specifically in AIA interneurons.

The protein resides in the cell membrane. The protein localises to the cell projection. It localises to the dendrite. Its subcellular location is the axon. It is found in the perikaryon. The catalysed reaction is GTP = 3',5'-cyclic GMP + diphosphate. Its function is as follows. Guanylate cyclase involved in the production of the second messenger cGMP. Regulates olfactory perception in AWC sensory neurons although may not be involved in the primary sensory transduction steps. In terms of biological role, isoforms c: Regulates sensory integration of conflicting sensory cues in AIA interneurons. Functionally, regulates sensory integration of conflicting sensory cues in AIA interneurons. This Caenorhabditis elegans protein is Receptor-type guanylate cyclase gcy-28.